We begin with the raw amino-acid sequence, 713 residues long: G-protein coupled receptor-associated protein LMBRD2 (713 aa).

The Extracellular segment spans residues 1-3; the sequence is MSG. Residues 4 to 21 form a helical membrane-spanning segment; the sequence is VALGIEIVSVFFLALFLL. At 22 to 32 the chain is on the cytoplasmic side; that stretch reads HRYGDFKKQHK. A helical membrane pass occupies residues 33 to 53; sequence LVIVGTLLAWYLCFLIVFIIP. Topologically, residues 54–122 are extracellular; the sequence is LDVSTTIYNR…SKPWSYIPRG (69 aa). N-linked (GlcNAc...) asparagine glycans are attached at residues Asn76 and Asn89. Residues 123-143 form a helical membrane-spanning segment; it reads IMPIFWRVVYWTSQFLTWILM. Residues 144–167 are Cytoplasmic-facing; that stretch reads PFMQSYARSGGFSITGKIKTALIE. A helical transmembrane segment spans residues 168–188; that stretch reads NAIYYGTYLLIFGALLIYVAV. Topologically, residues 189 to 203 are extracellular; the sequence is NPNLHLEWYQLQTIG. Residues 204–224 traverse the membrane as a helical segment; that stretch reads IAAANTWGLFLLVLLMGYGLV. At 225–404 the chain is on the cytoplasmic side; that stretch reads EIPRSQWNGA…ECLLRPWCSR (180 aa). A coiled-coil region spans residues 246-314; it reads KAAKLMTEKA…DDYEDFEEKN (69 aa). A helical transmembrane segment spans residues 405–425; it reads ILAVILALFSTVVVWSECTFF. At 426 to 449 the chain is on the extracellular side; the sequence is SAKPVLSLFAVFIQQAEQTHNYIY. A helical transmembrane segment spans residues 450–470; sequence VEVVCFLSIFFLSICVYSTVF. Residues 471–490 lie on the Cytoplasmic side of the membrane; that stretch reads RIRVFNYYYLASHHQTDAYS. The chain crosses the membrane as a helical span at residues 491-511; sequence LLFSGMLFCRLTPPLCLNFLG. Residues 512–538 lie on the Extracellular side of the membrane; that stretch reads LTHMDVSISHQNIEPTAYTSIMGSLRV. The chain crosses the membrane as a helical span at residues 539-559; that stretch reads LPLIADVFYIYYPMLVLILCI. The Cytoplasmic portion of the chain corresponds to 560–713; it reads ATYFSLGTRC…QSNSRIFDDV (154 aa). A coiled-coil region spans residues 587–620; sequence DLTDEGKELIKREKRKRQRLEDGETRRREWKERY. Residues 600–713 are disordered; that stretch reads KRKRQRLEDG…QSNSRIFDDV (114 aa). Positions 605–629 are enriched in basic and acidic residues; sequence RLEDGETRRREWKERYPTNREDTSR. Positions 643 to 657 are enriched in polar residues; the sequence is TEMTTNRSSKYTRAS. A compositionally biased stretch (basic and acidic residues) spans 658 to 667; it reads NRTERDRIEL. A compositionally biased stretch (polar residues) spans 701–713; it reads SMSQSNSRIFDDV.

It belongs to the LIMR family.

It is found in the cell membrane. Its function is as follows. May associate with G-protein coupled receptors and regulate downstream signaling pathways. The polypeptide is G-protein coupled receptor-associated protein LMBRD2 (lmbrd2) (Xenopus laevis (African clawed frog)).